We begin with the raw amino-acid sequence, 438 residues long: MAQFFKPKKKASVNTKHQSVDVVRLDHNGAGIAFVDKKPVFIEGALPGEKAIIQFIEQKKQFSRAKLIKLAQKSEKRQTPICQHYHECGGCNLQHLQHEEQIVAKNEKLQELMKKQGVSQGEMVQPIMGEELSYRRRARISLMLNKQTNQLDFGFRKKQSKAIVNVRHCPVLVQELDQHLESLFTLLNQLKGKKHLGHVELVQADNGSVLLIRHVADFNEKDQQALVNYCEERNLILYLMPEADVLNHVRGEEPFYLIDGTKIYFTPKDFIQVNRNVNEQMVEQALSWLDLNENDSVLDLFCGLGNFSLPLAKKVKTVVGIEGVDEMVQRAKLNAERNQLSNVSFYQANLEEEVSEQVWASTKFTKILLDPARAGAAGVMETVAKLKPQTVVYVSCNPATLARDSQLLIQHGFKLTRLGMLDMFPHTGHLESMALFER.

Residues 10–69 (KASVNTKHQSVDVVRLDHNGAGIAFVDKKPVFIEGALPGEKAIIQFIEQKKQFSRAKLIK) form the TRAM domain. The [4Fe-4S] cluster site is built by Cys-82, Cys-88, Cys-91, and Cys-169. 6 residues coordinate S-adenosyl-L-methionine: Gln-272, Phe-301, Asn-306, Glu-322, Asn-349, and Asp-370. The Nucleophile role is filled by Cys-396.

This sequence belongs to the class I-like SAM-binding methyltransferase superfamily. RNA M5U methyltransferase family. RlmD subfamily.

It carries out the reaction uridine(1939) in 23S rRNA + S-adenosyl-L-methionine = 5-methyluridine(1939) in 23S rRNA + S-adenosyl-L-homocysteine + H(+). Catalyzes the formation of 5-methyl-uridine at position 1939 (m5U1939) in 23S rRNA. This Aliivibrio fischeri (strain ATCC 700601 / ES114) (Vibrio fischeri) protein is 23S rRNA (uracil(1939)-C(5))-methyltransferase RlmD.